The chain runs to 262 residues: Indole-3-glycerol phosphate synthase (262 aa).

Belongs to the TrpC family.

It carries out the reaction 1-(2-carboxyphenylamino)-1-deoxy-D-ribulose 5-phosphate + H(+) = (1S,2R)-1-C-(indol-3-yl)glycerol 3-phosphate + CO2 + H2O. It participates in amino-acid biosynthesis; L-tryptophan biosynthesis; L-tryptophan from chorismate: step 4/5. The chain is Indole-3-glycerol phosphate synthase from Bordetella avium (strain 197N).